A 294-amino-acid polypeptide reads, in one-letter code: Elongation factor Ts (294 aa).

The tract at residues 81–84 is involved in Mg(2+) ion dislocation from EF-Tu; sequence TDFV.

Belongs to the EF-Ts family.

The protein resides in the cytoplasm. In terms of biological role, associates with the EF-Tu.GDP complex and induces the exchange of GDP to GTP. It remains bound to the aminoacyl-tRNA.EF-Tu.GTP complex up to the GTP hydrolysis stage on the ribosome. The protein is Elongation factor Ts of Levilactobacillus brevis (strain ATCC 367 / BCRC 12310 / CIP 105137 / JCM 1170 / LMG 11437 / NCIMB 947 / NCTC 947) (Lactobacillus brevis).